Consider the following 143-residue polypeptide: Transcriptional regulator MraZ (143 aa).

2 SpoVT-AbrB domains span residues 5 to 47 and 76 to 119; these read EYLH…PLDE and ATEC…SQAL.

This sequence belongs to the MraZ family. Forms oligomers.

The protein localises to the cytoplasm. It localises to the nucleoid. The protein is Transcriptional regulator MraZ of Desulfitobacterium hafniense (strain Y51).